Consider the following 268-residue polypeptide: Tryptophan synthase alpha chain (268 aa).

Catalysis depends on proton acceptor residues glutamate 49 and aspartate 60.

The protein belongs to the TrpA family. Tetramer of two alpha and two beta chains.

The enzyme catalyses (1S,2R)-1-C-(indol-3-yl)glycerol 3-phosphate + L-serine = D-glyceraldehyde 3-phosphate + L-tryptophan + H2O. Its pathway is amino-acid biosynthesis; L-tryptophan biosynthesis; L-tryptophan from chorismate: step 5/5. The alpha subunit is responsible for the aldol cleavage of indoleglycerol phosphate to indole and glyceraldehyde 3-phosphate. This chain is Tryptophan synthase alpha chain, found in Pseudomonas paraeruginosa (strain DSM 24068 / PA7) (Pseudomonas aeruginosa (strain PA7)).